Here is a 230-residue protein sequence, read N- to C-terminus: MALTPKQRKVRRDYLTRKKRTLQQQGASNAEIKAFMGGRWNFAGMSDKALERAYDEIKSKGRTQVFGNHVYTSDYVKKAKAWYGDKFSVEKLTQGFRSSQRSELNRFHSVKEVKEYRSERDREAKERYIQALEEMHYNTRDAGNKAQEKAFKSMISRIRRMSASNFGAFLTGGRSDKVSFDNVMVFVDTDGKETAFEFQDSLAREILDNVDKFSKQFVSDMRRRKKRGKK.

Positions 222–230 (RRRKKRGKK) match the Nuclear localization signal motif.

It localises to the host nucleus. It is found in the virion. In terms of biological role, DNA terminal protein is linked to the 5'-ends of both strands of the genome through a phosphodiester bond between the beta-hydroxyl group of a threonine residue and the 5'-phosphate of the terminal deoxyadenylate. This protein is essential for DNA replication and is involved in the priming of DNA elongation. This chain is Terminal protein (4), found in Streptococcus pneumoniae (Bacteriophage Cp-1).